Here is a 38-residue protein sequence, read N- to C-terminus: Large ribosomal subunit protein bL36 (38 aa).

This sequence belongs to the bacterial ribosomal protein bL36 family.

The sequence is that of Large ribosomal subunit protein bL36 from Synechocystis sp. (strain ATCC 27184 / PCC 6803 / Kazusa).